Reading from the N-terminus, the 194-residue chain is IMP cyclohydrolase (194 aa).

Belongs to the archaeal IMP cyclohydrolase family.

The enzyme catalyses IMP + H2O = 5-formamido-1-(5-phospho-D-ribosyl)imidazole-4-carboxamide. The protein operates within purine metabolism; IMP biosynthesis via de novo pathway; IMP from 5-formamido-1-(5-phospho-D-ribosyl)imidazole-4-carboxamide: step 1/1. In terms of biological role, catalyzes the cyclization of 5-formylamidoimidazole-4-carboxamide ribonucleotide to IMP. This chain is IMP cyclohydrolase, found in Halobacterium salinarum (strain ATCC 29341 / DSM 671 / R1).